We begin with the raw amino-acid sequence, 717 residues long: Myc proto-oncogene protein (717 aa).

Threonine 217 carries the post-translational modification Phosphothreonine. Serine 220 bears the Phosphoserine mark. 3 disordered regions span residues 288–376, 462–535, and 555–584; these read LNQH…KNNS, TPAS…LKDP, and HSSMMSKKSRGKKVVGTSSGNTSPISSGQD. The span at 298 to 311 shows a compositional bias: low complexity; that stretch reads QQQLNQQQLDEQQQ. Over residues 351–360 the composition is skewed to polar residues; sequence KSGSNASITT. Residues 361–376 show a composition bias toward low complexity; it reads NNNNSNNKNNKLKNNS. Residues 462 to 488 are compositionally biased toward polar residues; sequence TPASSSPVKSVANSRYPSPSSTPYQNC. The span at 489-523 shows a compositional bias: low complexity; it reads SSASPSYSPLSVDSSNVSSSSSSSSSQSSFTTSSS. Residues 625–638 form a basic motif region; the sequence is EKRNQHNDMERQRR. Residues 625–677 enclose the bHLH domain; it reads EKRNQHNDMERQRRIGLKNLFEALKKQIPTIRDKERAPKVNILREAAKLCIQL. The interval 639–677 is helix-loop-helix motif; sequence IGLKNLFEALKKQIPTIRDKERAPKVNILREAAKLCIQL.

The protein belongs to the Myc transcription factor family. Efficient DNA binding requires dimerization with another bHLH protein. Binds DNA as a heterodimer with Max. Interacts with ago. Interacts with lid. Part of a complex containing lid, Myc and ash2. Component of a complex with pont and rept. Interacts with puf. Interacts with wh/wuho; the interaction may be mediated by mei-P26 and may be involved in the regulation of ribosome biogenesis. Post-translationally, probably targeted for ubiquitination by the SFC ubiquitin ligase complex member ago, leading to its proteasomal degradation. Low levels detected throughout embryo before cellular blastoderm formation, particularly concentrated in pole plasm. Zygotic expression detected during cellular blastoderm stage in endodermal anlagen of anterior and posterior midgut at both poles. After gastrulation, expression detected in invaginating ventral furrow of mesoderm. Continued expression in anterior and posterior midgut and mesoderm during germband extension. During late germ-band retraction, expression remains detectable in fusing midgut and presumed developing somatic musculature.

It localises to the nucleus. The protein resides in the nucleolus. It is found in the cytoplasm. Functionally, participates in the regulation of gene transcription. Binds DNA in a non-specific manner, yet also specifically recognizes the core sequence CAC[GA]TG. Seems to activate the transcription of growth-related genes; required for cellular proliferation and growth. Functions in the TORC2-mediated regulation of cell growth, acting downstream of the TORC2 complex. Inhibits the demethylase activity of Lid. Activates transcription of mbm. Has a role in ribosome biogenesis and endoreplication in fat body cells by activating the transcription of LTV1. Able to induce the SCF E3 ubiquitin-protein ligase member archipelago (ago) which functions in its degradation. It may therefore create a negative feedback loop with ago that is regulated by the ubiquitin hydrolase puf. In dopaminergic neurons, regulates dopamine levels by binding to the E-box (E1) of the dopamine decarboxylase Ddc promoter and thereby inhibiting its transcription. This regulation is required to suppress male-male courtship. Involved in the acs and insulin signaling mediated non-cell-autonomous induction of amino acid release into the hemolymph following the cytoplasmic purge response to intestinal bacterial infection; required for efficient recovery of enterocyte thickness. In Drosophila melanogaster (Fruit fly), this protein is Myc proto-oncogene protein.